A 125-amino-acid polypeptide reads, in one-letter code: Protein MGF 110-3L (125 aa).

Topologically, residues 1–6 (MLVIFL) are cytoplasmic. A helical transmembrane segment spans residues 7–27 (GILGLLANQVFGLPAKNAGHL). Residues 28 to 116 (YSTENPPEEE…VPHNRPHRLG (89 aa)) are Extracellular-facing. N-linked (GlcNAc...) asparagine; by host glycosylation is present at asparagine 64.

This sequence belongs to the asfivirus MGF 110 family.

It localises to the host membrane. Functionally, plays a role in virus cell tropism, and may be required for efficient virus replication in macrophages. This is Protein MGF 110-3L from African swine fever virus (isolate Pig/Kenya/KEN-50/1950) (ASFV).